Here is a 370-residue protein sequence, read N- to C-terminus: Dual-specificity RNA methyltransferase RlmN (370 aa).

Glu-93 functions as the Proton acceptor in the catalytic mechanism. Residues 99-337 enclose the Radical SAM core domain; it reads EEGRGTLCVS…VTTVRKTRGD (239 aa). An intrachain disulfide couples Cys-106 to Cys-343. 3 residues coordinate [4Fe-4S] cluster: Cys-113, Cys-117, and Cys-120. Residues 167 to 168, Ser-199, 221 to 223, and Asn-300 contribute to the S-adenosyl-L-methionine site; these read GE and SLH. The active-site S-methylcysteine intermediate is the Cys-343.

Belongs to the radical SAM superfamily. RlmN family. Requires [4Fe-4S] cluster as cofactor.

It localises to the cytoplasm. The catalysed reaction is adenosine(2503) in 23S rRNA + 2 reduced [2Fe-2S]-[ferredoxin] + 2 S-adenosyl-L-methionine = 2-methyladenosine(2503) in 23S rRNA + 5'-deoxyadenosine + L-methionine + 2 oxidized [2Fe-2S]-[ferredoxin] + S-adenosyl-L-homocysteine. It carries out the reaction adenosine(37) in tRNA + 2 reduced [2Fe-2S]-[ferredoxin] + 2 S-adenosyl-L-methionine = 2-methyladenosine(37) in tRNA + 5'-deoxyadenosine + L-methionine + 2 oxidized [2Fe-2S]-[ferredoxin] + S-adenosyl-L-homocysteine. Specifically methylates position 2 of adenine 2503 in 23S rRNA and position 2 of adenine 37 in tRNAs. m2A2503 modification seems to play a crucial role in the proofreading step occurring at the peptidyl transferase center and thus would serve to optimize ribosomal fidelity. The sequence is that of Dual-specificity RNA methyltransferase RlmN from Francisella philomiragia subsp. philomiragia (strain ATCC 25017 / CCUG 19701 / FSC 153 / O#319-036).